An 89-amino-acid polypeptide reads, in one-letter code: Small ribosomal subunit protein uS15 (89 aa).

Belongs to the universal ribosomal protein uS15 family. In terms of assembly, part of the 30S ribosomal subunit. Forms a bridge to the 50S subunit in the 70S ribosome, contacting the 23S rRNA.

Functionally, one of the primary rRNA binding proteins, it binds directly to 16S rRNA where it helps nucleate assembly of the platform of the 30S subunit by binding and bridging several RNA helices of the 16S rRNA. In terms of biological role, forms an intersubunit bridge (bridge B4) with the 23S rRNA of the 50S subunit in the ribosome. The polypeptide is Small ribosomal subunit protein uS15 (Phocaeicola vulgatus (strain ATCC 8482 / DSM 1447 / JCM 5826 / CCUG 4940 / NBRC 14291 / NCTC 11154) (Bacteroides vulgatus)).